A 329-amino-acid polypeptide reads, in one-letter code: DNA-directed RNA polymerase subunit alpha (329 aa).

Residues 1-235 (MVREKVKVST…DLFIPFLHTE (235 aa)) are alpha N-terminal domain (alpha-NTD). Residues 269-329 (IALKYIFIDQ…KQILGILEKK (61 aa)) are alpha C-terminal domain (alpha-CTD).

Belongs to the RNA polymerase alpha chain family. In plastids the minimal PEP RNA polymerase catalytic core is composed of four subunits: alpha, beta, beta', and beta''. When a (nuclear-encoded) sigma factor is associated with the core the holoenzyme is formed, which can initiate transcription.

Its subcellular location is the plastid. The protein localises to the chloroplast. The catalysed reaction is RNA(n) + a ribonucleoside 5'-triphosphate = RNA(n+1) + diphosphate. DNA-dependent RNA polymerase catalyzes the transcription of DNA into RNA using the four ribonucleoside triphosphates as substrates. This chain is DNA-directed RNA polymerase subunit alpha, found in Gossypium hirsutum (Upland cotton).